Reading from the N-terminus, the 459-residue chain is Alcohol acyl transferase 1 allele GSd (459 aa).

Residues H164 and N385 each act as proton acceptor in the active site.

It belongs to the plant acyltransferase family. In terms of tissue distribution, expressed at very low levels in the cortex and skin of ripe fruit.

Functionally, involved in the biosynthesis of volatile esters which confer ripe apple fruit flavor. Alcohol acyl transferase that can use a wide range of alcohols as substrate to produce esters. This chain is Alcohol acyl transferase 1 allele GSd, found in Malus domestica (Apple).